The primary structure comprises 134 residues: Secreted RxLR effector protein 1 (134 aa).

Residues 1–22 form the signal peptide; it reads MFCRSPLVAVILLVLATHIVLA. A disordered region spans residues 32–60; sequence SETVPSDSSQTTRKSTRRTTSVDNKRRLR. Residues 37-52 show a composition bias toward low complexity; sequence SDSSQTTRKSTRRTTS. The RxLR-dEER motif lies at 57 to 79; that stretch reads RRLRQQIMGKDGPVVNDVHAEER.

Belongs to the RxLR effector family.

The protein localises to the secreted. It localises to the host nucleus. Functionally, effector that acts as a broad suppressor of cell death to interrupt plant immunity. Inhibits cell death induced by cell death-inducing proteins, including the PAMP elicitor INF1 from P.infestans. The sequence is that of Secreted RxLR effector protein 1 from Plasmopara viticola (Downy mildew of grapevine).